We begin with the raw amino-acid sequence, 449 residues long: Keratin, type I cuticular Ha7 (449 aa).

The segment at 1 to 104 (MTSFYSTSSC…YGKNTLNGHE (104 aa)) is head. The IF rod domain maps to 104–415 (EKETMKFLND…NLLESEDCKL (312 aa)). The segment at 105–139 (KETMKFLNDRLANYLEKVRQLEQENAELETTLLER) is coil 1A. The linker 1 stretch occupies residues 140 to 150 (SKCHESTVCPD). The coil 1B stretch occupies residues 151–251 (YQSYFRTIEE…HEQEVKILRS (101 aa)). A linker 12 region spans residues 252-267 (QLGEKFRIELDIEPTI). The segment at 268-411 (DLNRVLGEMR…ATYRNLLESE (144 aa)) is coil 2. The tail stretch occupies residues 416–449 (PCNPCSTPASCTSCPSCGPVTGGSPSGHGASMGR).

Belongs to the intermediate filament family.

The sequence is that of Keratin, type I cuticular Ha7 (KRT37) from Homo sapiens (Human).